We begin with the raw amino-acid sequence, 153 residues long: uncharacterized protein (153 aa).

Residues 1–25 (MKKRQYLKSLYVALLGTLCYLSVNA) form the signal peptide.

This is an uncharacterized protein from Pasteurella multocida (strain Pm70).